The chain runs to 230 residues: Cutinase (230 aa).

Residues 1 to 16 (MKFFALTTFLAATASA) form the signal peptide. The cysteines at positions 47 and 125 are disulfide-linked. S136 (nucleophile) is an active-site residue. A disulfide bond links C187 and C194. D191 is an active-site residue. H204 serves as the catalytic Proton donor/acceptor.

It belongs to the cutinase family. In terms of processing, the 2 disulfide bonds play a critical role in holding the catalytic residues in juxta-position; reduction of the disulfide bridges results in the complete inactivation of the enzyme.

The protein resides in the secreted. It carries out the reaction cutin + H2O = cutin monomers.. Catalyzes the hydrolysis of complex carboxylic polyesters found in the cell wall of plants. Degrades cutin, a macromolecule that forms the structure of the plant cuticle. Allows pathogenic fungi to penetrate through the cuticular barrier into the host plant during the initial stage of fungal infection. In Fusarium solani subsp. cucurbitae (Neocosmosporum cucurbitae), this protein is Cutinase (CUTA).